A 340-amino-acid chain; its full sequence is Phosphate acyltransferase (340 aa).

Belongs to the PlsX family. Homodimer. Probably interacts with PlsY.

It is found in the cytoplasm. It carries out the reaction a fatty acyl-[ACP] + phosphate = an acyl phosphate + holo-[ACP]. Its pathway is lipid metabolism; phospholipid metabolism. In terms of biological role, catalyzes the reversible formation of acyl-phosphate (acyl-PO(4)) from acyl-[acyl-carrier-protein] (acyl-ACP). This enzyme utilizes acyl-ACP as fatty acyl donor, but not acyl-CoA. This Pseudomonas syringae pv. tomato (strain ATCC BAA-871 / DC3000) protein is Phosphate acyltransferase.